The primary structure comprises 447 residues: N-succinylarginine dihydrolase (447 aa).

Substrate is bound by residues 19 to 28 (AGLSFGNEAS), Asn-110, and 137 to 138 (HR). Residue Glu-174 is part of the active site. A substrate-binding site is contributed by Arg-212. The active site involves His-248. 2 residues coordinate substrate: Asp-250 and Asn-359. Cys-365 functions as the Nucleophile in the catalytic mechanism.

It belongs to the succinylarginine dihydrolase family. As to quaternary structure, homodimer.

The catalysed reaction is N(2)-succinyl-L-arginine + 2 H2O + 2 H(+) = N(2)-succinyl-L-ornithine + 2 NH4(+) + CO2. It participates in amino-acid degradation; L-arginine degradation via AST pathway; L-glutamate and succinate from L-arginine: step 2/5. In terms of biological role, catalyzes the hydrolysis of N(2)-succinylarginine into N(2)-succinylornithine, ammonia and CO(2). The protein is N-succinylarginine dihydrolase of Escherichia coli (strain SE11).